The sequence spans 224 residues: Protein GrpE (224 aa).

Polar residues-rich tracts occupy residues 1–16 and 209–224; these read MSGD…NVES and ESSS…EGDA. 2 disordered regions span residues 1–35 and 203–224; these read MSGD…DPVV and SMGP…EGDA.

This sequence belongs to the GrpE family. In terms of assembly, homodimer.

The protein resides in the cytoplasm. Participates actively in the response to hyperosmotic and heat shock by preventing the aggregation of stress-denatured proteins, in association with DnaK and GrpE. It is the nucleotide exchange factor for DnaK and may function as a thermosensor. Unfolded proteins bind initially to DnaJ; upon interaction with the DnaJ-bound protein, DnaK hydrolyzes its bound ATP, resulting in the formation of a stable complex. GrpE releases ADP from DnaK; ATP binding to DnaK triggers the release of the substrate protein, thus completing the reaction cycle. Several rounds of ATP-dependent interactions between DnaJ, DnaK and GrpE are required for fully efficient folding. The sequence is that of Protein GrpE from Synechococcus sp. (strain CC9902).